Here is a 116-residue protein sequence, read N- to C-terminus: Vesicle-associated membrane protein 2 (116 aa).

The disordered stretch occupies residues 1-33 (MSATAATAPPAAPAGEGGPPAPPPNLTSNRRLQ). Serine 2 bears the N-acetylserine mark. The Cytoplasmic segment spans residues 2-94 (SATAATAPPA…KRKYWWKNLK (93 aa)). The 61-residue stretch at 31 to 91 (RLQQTQAQVD…AKLKRKYWWK (61 aa)) folds into the v-SNARE coiled-coil homology domain. A required for interaction with SEPT8 region spans residues 92–116 (NLKMMIILGVICAIILIIIIVYFSS). The helical; Anchor for type IV membrane protein transmembrane segment at 95 to 114 (MMIILGVICAIILIIIIVYF) threads the bilayer. Residues 115 to 116 (SS) are Vesicular-facing.

Belongs to the synaptobrevin family. In terms of assembly, part of the SNARE core complex containing SNAP25, VAMP2 and STX1A; this complex constitutes the basic catalytic machinery of the complex neurotransmitter release apparatus. Recruited to the SNARE complex following binding of the SNARE complex component STX1A to STXBP1. This complex binds to CPLX1. Interacts with POPDC1 and STX4. Interacts with VAPA and VAPB. Interacts with WDFY2, PRKCZ and PRKCI. Forms a complex with WDFY2 and PRKCZ. Interacts (via N-terminus) with KCNB1 (via N-terminus and C-terminus); stimulates the channel inactivation rate of KCNB1. Interacts with SEPT8; the interaction inhibits interaction of VAMP2 with SYP. Interacts with SYP; the interaction is inhibited by interaction with SEPT8. Interacts with PICALM. Interacts with alpha-synuclein/SNCA. Interacts with STX3. In terms of processing, phosphorylated by PRKCZ in vitro and this phosphorylation is increased in the presence of WDFY2.

It is found in the cytoplasmic vesicle. Its subcellular location is the secretory vesicle. The protein resides in the synaptic vesicle membrane. The protein localises to the cell membrane. Its function is as follows. Involved in the targeting and/or fusion of transport vesicles to their target membrane. Major SNARE protein of synaptic vesicles which mediates fusion of synaptic vesicles to release neurotransmitters. Essential for fast vesicular exocytosis and activity-dependent neurotransmitter release as well as fast endocytosis that mediates rapid reuse of synaptic vesicles. Modulates the gating characteristics of the delayed rectifier voltage-dependent potassium channel KCNB1. This is Vesicle-associated membrane protein 2 (VAMP2) from Bos taurus (Bovine).